The sequence spans 229 residues: uncharacterized protein (229 aa).

A coiled-coil region spans residues 66–94 (GHEKLQIQSALRDIESAENQARVQQCNAK).

This is an uncharacterized protein from Ostreid herpesvirus 1 (isolate France) (OsHV-1).